The primary structure comprises 354 residues: UDP-N-acetylglucosamine--N-acetylmuramyl-(pentapeptide) pyrophosphoryl-undecaprenol N-acetylglucosamine transferase (354 aa).

Residues 11–13 (TAG), Arg164, Ser194, and Gln289 contribute to the UDP-N-acetyl-alpha-D-glucosamine site.

Belongs to the glycosyltransferase 28 family. MurG subfamily.

The protein resides in the cell membrane. It carries out the reaction di-trans,octa-cis-undecaprenyl diphospho-N-acetyl-alpha-D-muramoyl-L-alanyl-D-glutamyl-meso-2,6-diaminopimeloyl-D-alanyl-D-alanine + UDP-N-acetyl-alpha-D-glucosamine = di-trans,octa-cis-undecaprenyl diphospho-[N-acetyl-alpha-D-glucosaminyl-(1-&gt;4)]-N-acetyl-alpha-D-muramoyl-L-alanyl-D-glutamyl-meso-2,6-diaminopimeloyl-D-alanyl-D-alanine + UDP + H(+). It functions in the pathway cell wall biogenesis; peptidoglycan biosynthesis. In terms of biological role, cell wall formation. Catalyzes the transfer of a GlcNAc subunit on undecaprenyl-pyrophosphoryl-MurNAc-pentapeptide (lipid intermediate I) to form undecaprenyl-pyrophosphoryl-MurNAc-(pentapeptide)GlcNAc (lipid intermediate II). This Lachnospira eligens (strain ATCC 27750 / DSM 3376 / VPI C15-48 / C15-B4) (Eubacterium eligens) protein is UDP-N-acetylglucosamine--N-acetylmuramyl-(pentapeptide) pyrophosphoryl-undecaprenol N-acetylglucosamine transferase.